A 770-amino-acid chain; its full sequence is Shutoff protein (770 aa).

Disordered stretches follow at residues 1 to 20 (MEED…PNSE) and 30 to 49 (EEEN…PEDG). Residues 10 to 19 (DSETLTTPNS) are compositionally biased toward polar residues. Residues 248–312 (VMDQVLIKRA…AVLVTVELEC (65 aa)) are binding to host EIF4G. The region spanning 315 to 433 (RFFANPQTLR…ELWTSFDERT (119 aa)) is the RRM domain. 2 positions are modified to phosphotyrosine; by host: tyrosine 332 and tyrosine 647. Residues 661–770 (LSAAASCRSQ…TATMFTESQP (110 aa)) are disordered. Positions 726-739 (GGPRGRGGRNHRQR) are enriched in basic residues. Polar residues predominate over residues 742 to 755 (TIFQKTRSEPTSEN).

The protein belongs to the adenoviridae shutoff protein family. In terms of assembly, monomer. Interacts with hexon protein; this interaction allows chaperoning and trimerization of hexon proteins. Interacts (via N-terminus) with host initiation factor EIF4G (via C-terminus). Interacts (via RRM domain) with viral mRNAs that contain the tripartite leader; this interaction allows ribosome shunting and expression of viral late mRNAs. In terms of processing, might be cleaved by the viral protease. Post-translationally, phosphorylated. Tyrosine phosphorylation enhances preferential binding to tripartite leader mRNAs and allows ribosome shunting. Methylated. Asymmetric dimethylation by host PRMT1 of the Arg/Gly-rich region may regulate shutoff protein binding to hexon and promote the capsid assembly in the nucleus.

Its subcellular location is the host cytoplasm. In terms of biological role, protein that inhibits host translation while promoting late viral translation by ribosome shunting. Blocks host cap-dependent translation by binding to eIF4G, displacing MKNK1 from cap initiation complexes and preventing EIF4E phosphorylation. Binds to the tripartite leader sequence of viral late mRNAs and recruits host eIF4G, PABPC1/poly-A binding protein and 40S ribosomes subunits on viral mRNAs, allowing ribosome shunting and efficient translation of late viral mRNAs even though conventional translation via ribosome scanning from the cap has been shut off in the host cell. During assembly, acts as a chaperone protein that helps hexon proteins assembly into trimers. This Human adenovirus F serotype 40 (HAdV-40) protein is Shutoff protein.